The chain runs to 278 residues: 2-dehydro-3-deoxyphosphooctonate aldolase (278 aa).

This sequence belongs to the KdsA family.

The protein localises to the cytoplasm. The catalysed reaction is D-arabinose 5-phosphate + phosphoenolpyruvate + H2O = 3-deoxy-alpha-D-manno-2-octulosonate-8-phosphate + phosphate. It functions in the pathway carbohydrate biosynthesis; 3-deoxy-D-manno-octulosonate biosynthesis; 3-deoxy-D-manno-octulosonate from D-ribulose 5-phosphate: step 2/3. The protein operates within bacterial outer membrane biogenesis; lipopolysaccharide biosynthesis. The polypeptide is 2-dehydro-3-deoxyphosphooctonate aldolase (Bartonella tribocorum (strain CIP 105476 / IBS 506)).